The following is a 294-amino-acid chain: Protein C3orf33 (294 aa).

Residue Ala2 is modified to N-acetylalanine. The chain crosses the membrane as a helical span at residues 40–56 (ISTGMAIAGIMLLLRSI).

Highly expressed in ileocecal tissue and endometrium.

It localises to the membrane. Its subcellular location is the secreted. Secreted protein may play a role in transcription regulation via the MAPK3/MAPK1 pathway through an unidentified receptor on the plasma membrane. This chain is Protein C3orf33 (C3orf33), found in Homo sapiens (Human).